The chain runs to 375 residues: Fasciculation and elongation protein zeta-2 (375 aa).

Residues 1-42 (MAADGDWQDFYEFQEPAGSVRDQENCNASPEAGAGAHAGGDS) form a disordered region. A phosphoserine mark is found at S130, S171, and S190. Positions 156–177 (TADQVIEEIEEMMQESPDLEDD) form a coiled coil. Residues 206–281 (ERVKRLSVSE…AKKKKKLKNG (76 aa)) are a coiled coil. The interval 265-297 (QKEHKETAKKKKKLKNGSSQNGRNERSHMPGTR) is disordered.

This sequence belongs to the zygin family. Homodimer; disulfide-linked. May form heterodimers with FEZ1. Interacts with synaptotagmin.

Its function is as follows. Involved in axonal outgrowth and fasciculation. The protein is Fasciculation and elongation protein zeta-2 (Fez2) of Rattus norvegicus (Rat).